The chain runs to 721 residues: MPDLLIELRSEEIPARMQRKAAGDLKKLVTDALVEAGLTYEGAREYWTPRRLTLDIRGLNARSADVREERKGPRTDANEKAIEGFLRAAGLSSIGDAHVHSDPKKGDFYVAHIVKPGRDAEDIVAEVMPAIIRDFPWPKSMRSGAASAKPGSLRWVRPLQSIVCTFGAETEETRVIPFAVDGITASNITYGHRFHAPEAIMVRRFADYADKLEKAKVVLDAERRKEIIGADARNIAFANGLELVEDEGLLEEVTGLVEWPRVLMGSFEESYLEIPSEIIRLTIKTNQKCFVTRQPGAETLSNRFILVSNIEAKDGGKEIVHGNGKVVRARLSDAAHFWKRDQGDLPDLETLKPSAEKFGLDLGKPLDQRMAKLDALNVTFHAKLGTQGERVARIRSIALALAEVTGADQALVERSVVLAKADLRTEAVGEFPELQGIMGHKYAVLQGEDAAVANAIEDHYKPQGPSDRVPTDAVSAAVALADKLDTLAGFWAIDEKPTGSKDPYALRRAALGVIRLILEGRTRLPLLPFFDVALKALRTQRPDLTGDIAADLLAFFHDRLKVYLRDLGARYDLIDAVLTSEADDLLMIARRVEALTAFITAEEGKNLLAGTKRATQILAAEEKKGTEVADQVDERLFRLDAERTLHASIKLASDDAREAIGKEDFRSAMAALSKLREPVDVFFNDVLVNDEDRAIRANRLALLGLIRSATGEVADFSKISG.

It belongs to the class-II aminoacyl-tRNA synthetase family. In terms of assembly, tetramer of two alpha and two beta subunits.

It localises to the cytoplasm. The catalysed reaction is tRNA(Gly) + glycine + ATP = glycyl-tRNA(Gly) + AMP + diphosphate. In Sinorhizobium fredii (strain NBRC 101917 / NGR234), this protein is Glycine--tRNA ligase beta subunit.